An 846-amino-acid polypeptide reads, in one-letter code: Spindle pole body component SPC98 (846 aa).

Residues Ser-124 and Ser-136 each carry the phosphoserine modification.

The protein belongs to the TUBGCP family. In terms of assembly, interacts with TUB4, SPC72 and SPC97.

The protein localises to the nucleus. The protein resides in the cytoplasm. Its subcellular location is the cytoskeleton. It is found in the microtubule organizing center. It localises to the spindle pole body. In terms of biological role, involved in microtubule organization by the microtubule organizing center, the spindle pole body (SPB). Probably part of the microtubule attachment site at the SPB. This chain is Spindle pole body component SPC98 (SPC98), found in Saccharomyces cerevisiae (strain ATCC 204508 / S288c) (Baker's yeast).